Reading from the N-terminus, the 289-residue chain is Phosphatidylserine decarboxylase proenzyme (289 aa).

Catalysis depends on charge relay system; for autoendoproteolytic cleavage activity residues D89, H146, and S252. The Schiff-base intermediate with substrate; via pyruvic acid; for decarboxylase activity role is filled by S252. S252 is modified (pyruvic acid (Ser); by autocatalysis).

This sequence belongs to the phosphatidylserine decarboxylase family. PSD-B subfamily. Prokaryotic type I sub-subfamily. Heterodimer of a large membrane-associated beta subunit and a small pyruvoyl-containing alpha subunit. The cofactor is pyruvate. In terms of processing, is synthesized initially as an inactive proenzyme. Formation of the active enzyme involves a self-maturation process in which the active site pyruvoyl group is generated from an internal serine residue via an autocatalytic post-translational modification. Two non-identical subunits are generated from the proenzyme in this reaction, and the pyruvate is formed at the N-terminus of the alpha chain, which is derived from the carboxyl end of the proenzyme. The autoendoproteolytic cleavage occurs by a canonical serine protease mechanism, in which the side chain hydroxyl group of the serine supplies its oxygen atom to form the C-terminus of the beta chain, while the remainder of the serine residue undergoes an oxidative deamination to produce ammonia and the pyruvoyl prosthetic group on the alpha chain. During this reaction, the Ser that is part of the protease active site of the proenzyme becomes the pyruvoyl prosthetic group, which constitutes an essential element of the active site of the mature decarboxylase.

Its subcellular location is the cell membrane. It catalyses the reaction a 1,2-diacyl-sn-glycero-3-phospho-L-serine + H(+) = a 1,2-diacyl-sn-glycero-3-phosphoethanolamine + CO2. Its pathway is phospholipid metabolism; phosphatidylethanolamine biosynthesis; phosphatidylethanolamine from CDP-diacylglycerol: step 2/2. In terms of biological role, catalyzes the formation of phosphatidylethanolamine (PtdEtn) from phosphatidylserine (PtdSer). This chain is Phosphatidylserine decarboxylase proenzyme, found in Shewanella putrefaciens (strain CN-32 / ATCC BAA-453).